The sequence spans 333 residues: MYSLLRPLLFRLDAEKAHSLTLSLLHYLPGFYFRKMAGQPVHAMGLVFPHQVGLAAGLDKNGEHLDALAKLGFSFIELGTVTPKGQTGNPKPRLFRIAEANAIINRMGFNNSGVDVLVENVKSANYKGILGINIGKNKETNLNQAADDYLYCFRKVYDHASYVTINISSPNTPDLRQLQQGDYFAELLAQLQKEQIKLADQYGRHVPLVVKVSPDETDETLKQMTDIILQYGIEGIIATNTTCSREMVKNLPCSEEQGGLSGRPLMELSTRCLRLLKQYVGNDVTLIGVGGIDSLESAKDKINAGASLLQVYSGLVYKGPELIHDIVSGLNAV.

FMN-binding positions include 56 to 60 and Thr80; that span reads AGLDK. Lys60 is a binding site for substrate. 105-109 is a binding site for substrate; sequence NRMGF. FMN-binding residues include Asn133 and Asn166. Asn166 serves as a coordination point for substrate. The Nucleophile role is filled by Ser169. Position 171 (Asn171) interacts with substrate. Residues Lys211 and Thr239 each contribute to the FMN site. 240 to 241 contacts substrate; the sequence is NT. FMN-binding positions include Gly262, Gly291, and 312–313; that span reads YS.

The protein belongs to the dihydroorotate dehydrogenase family. Type 2 subfamily. Monomer. Requires FMN as cofactor.

It localises to the cell membrane. The catalysed reaction is (S)-dihydroorotate + a quinone = orotate + a quinol. It participates in pyrimidine metabolism; UMP biosynthesis via de novo pathway; orotate from (S)-dihydroorotate (quinone route): step 1/1. Its function is as follows. Catalyzes the conversion of dihydroorotate to orotate with quinone as electron acceptor. The sequence is that of Dihydroorotate dehydrogenase (quinone) from Legionella pneumophila (strain Lens).